The primary structure comprises 686 residues: Translation initiation factor IF-2 (686 aa).

The interval 54–105 is disordered; sequence KPSVADEFEVEEKVVRSKKNSNKKKKKGKGNEDKRQENFAGRQQTQTVETPD. Over residues 69-81 the composition is skewed to basic residues; it reads RSKKNSNKKKKKG. A tr-type G domain is found at 188-357; the sequence is ERPAVVTIMG…LLVSEVEEYK (170 aa). The segment at 197 to 204 is G1; it reads GHVDHGKT. 197–204 serves as a coordination point for GTP; it reads GHVDHGKT. Residues 222-226 form a G2 region; it reads GITQH. The G3 stretch occupies residues 243 to 246; the sequence is DTPG. Residues 243-247 and 297-300 contribute to the GTP site; these read DTPGH and NKMD. The G4 stretch occupies residues 297-300; it reads NKMD. A G5 region spans residues 333–335; the sequence is SAI.

It belongs to the TRAFAC class translation factor GTPase superfamily. Classic translation factor GTPase family. IF-2 subfamily.

Its subcellular location is the cytoplasm. One of the essential components for the initiation of protein synthesis. Protects formylmethionyl-tRNA from spontaneous hydrolysis and promotes its binding to the 30S ribosomal subunits. Also involved in the hydrolysis of GTP during the formation of the 70S ribosomal complex. This chain is Translation initiation factor IF-2, found in Bacillus cereus (strain 03BB102).